The following is a 356-amino-acid chain: Rhomboid-related protein 1 (356 aa).

7 consecutive transmembrane segments (helical) span residues 107-129, 172-194, 201-223, 227-249, 256-275, 290-312, and 319-341; these read WCPP…FFYW, YMFL…LVGI, KIWR…QYAI, SLLV…NVIL, LRWI…FGGA, HLAH…YNVV, and IIRY…FVIV. The active-site Nucleophile is S233. The active site involves H293.

This sequence belongs to the peptidase S54 family.

Its subcellular location is the membrane. It carries out the reaction Cleaves type-1 transmembrane domains using a catalytic dyad composed of serine and histidine that are contributed by different transmembrane domains.. In terms of biological role, serine protease which activates lin-3 isoform a in the proximal vulva precursor cells (VPC) during vulva development to transmit the inductive anchor cell signal to the distal VPCs. The polypeptide is Rhomboid-related protein 1 (Caenorhabditis elegans).